A 406-amino-acid chain; its full sequence is Imidazolonepropionase (406 aa).

Residues histidine 72 and histidine 74 each coordinate Fe(3+). Zn(2+) contacts are provided by histidine 72 and histidine 74. 4-imidazolone-5-propanoate is bound by residues arginine 81, tyrosine 144, and histidine 177. Position 144 (tyrosine 144) interacts with N-formimidoyl-L-glutamate. Residue histidine 242 participates in Fe(3+) binding. Histidine 242 provides a ligand contact to Zn(2+). 4-imidazolone-5-propanoate is bound at residue glutamine 245. Aspartate 317 provides a ligand contact to Fe(3+). Aspartate 317 lines the Zn(2+) pocket. N-formimidoyl-L-glutamate is bound by residues asparagine 319 and glycine 321. Threonine 322 provides a ligand contact to 4-imidazolone-5-propanoate.

Belongs to the metallo-dependent hydrolases superfamily. HutI family. It depends on Zn(2+) as a cofactor. Fe(3+) serves as cofactor.

It localises to the cytoplasm. The catalysed reaction is 4-imidazolone-5-propanoate + H2O = N-formimidoyl-L-glutamate. It functions in the pathway amino-acid degradation; L-histidine degradation into L-glutamate; N-formimidoyl-L-glutamate from L-histidine: step 3/3. Catalyzes the hydrolytic cleavage of the carbon-nitrogen bond in imidazolone-5-propanoate to yield N-formimidoyl-L-glutamate. It is the third step in the universal histidine degradation pathway. The chain is Imidazolonepropionase from Yersinia pseudotuberculosis serotype O:1b (strain IP 31758).